A 157-amino-acid polypeptide reads, in one-letter code: ATP synthase subunit delta (157 aa).

This sequence belongs to the ATPase delta chain family. F-type ATPases have 2 components, F(1) - the catalytic core - and F(0) - the membrane proton channel. F(1) has five subunits: alpha(3), beta(3), gamma(1), delta(1), epsilon(1). F(0) has three main subunits: a(1), b(2) and c(10-14). The alpha and beta chains form an alternating ring which encloses part of the gamma chain. F(1) is attached to F(0) by a central stalk formed by the gamma and epsilon chains, while a peripheral stalk is formed by the delta and b chains.

The protein resides in the cell membrane. Functionally, f(1)F(0) ATP synthase produces ATP from ADP in the presence of a proton or sodium gradient. F-type ATPases consist of two structural domains, F(1) containing the extramembraneous catalytic core and F(0) containing the membrane proton channel, linked together by a central stalk and a peripheral stalk. During catalysis, ATP synthesis in the catalytic domain of F(1) is coupled via a rotary mechanism of the central stalk subunits to proton translocation. In terms of biological role, this protein is part of the stalk that links CF(0) to CF(1). It either transmits conformational changes from CF(0) to CF(1) or is implicated in proton conduction. This is ATP synthase subunit delta from Chloroflexus aurantiacus (strain ATCC 29364 / DSM 637 / Y-400-fl).